The chain runs to 366 residues: MTTISDLPEDVVEEILPRVPLTSLSAVRSICKTWNTLSKNRVLCKAAVKKQFLGFIMMDYRVCSMKFHLRNDEGGDLVDDLSIKQVGILDQIEISEVLHCDGLLLFVTKDNSSLVVWNPYLGQTRLIQPSNNFHCSDRYAIGYDNNRNLKILRNFSDYGSSGSNKRGVSFKGNTYILAQGKIRVDSRWKIEAILLSFDFTTERFGPRLQLPFGFYYPQDLFSLSCVREEQLVVLHQSWMVSGELEIWITNKIDPGVVSWTKFLRSISCCRISIQAGSFFINEENQVAVVFDLDEYKGSETCRNQTAYIIGQDEYFKSVNIGEAPNLGRPEKYAPHIYCRPLVCSSYVPSLVPLQINQPDTRKESDD.

Residues 1–51 (MTTISDLPEDVVEEILPRVPLTSLSAVRSICKTWNTLSKNRVLCKAAVKKQ) form the F-box domain.

In Arabidopsis thaliana (Mouse-ear cress), this protein is Putative F-box protein At3g13624.